The chain runs to 474 residues: MAGRTLYDKLWDDHVVSQRDDGSSLIYIDRHIVHEVTSPQAFEGLRIAGRKPWRTDSVIATPDHNVPTTFNERASGVDGIADPISKIQVKTLDDNCDELGIVEFKINDNRQGIVHVVGPETGGCLPGMTIVCGDSHTSTNGALGALSFGIGTSEVEHVLATQCLVAKKMKNMLIKVDGQLGQGVTAKDVVLAIIAKIGTAGGTGFAIEFGGDVFRAMSMEGRLTVCNMAIEAGARAGMVAVDEITLDYVKGRAFAPKGDHWAMAEARWRELHSDADAVFDEVVELDGAQIKPQVSWGTSPEMVLPVDGVIPDPAQESDGVKAAGVARALEYMGLTPGQKITDIAVDRVFIGSCTNSRIEDIRAAAKVVAGKTKAASVKEAIVVPGSGAVKAEAEAEGLDKIFTAANIEWREPGCSMCLAMNADRLGEGEHCASTSNRNFEGRQGYGGRTHLVSPAMAAAAAISGHFVDIRDWQS.

Cysteine 353, cysteine 414, and cysteine 417 together coordinate [4Fe-4S] cluster.

Belongs to the aconitase/IPM isomerase family. LeuC type 1 subfamily. Heterodimer of LeuC and LeuD. [4Fe-4S] cluster serves as cofactor.

It carries out the reaction (2R,3S)-3-isopropylmalate = (2S)-2-isopropylmalate. It functions in the pathway amino-acid biosynthesis; L-leucine biosynthesis; L-leucine from 3-methyl-2-oxobutanoate: step 2/4. Functionally, catalyzes the isomerization between 2-isopropylmalate and 3-isopropylmalate, via the formation of 2-isopropylmaleate. This chain is 3-isopropylmalate dehydratase large subunit, found in Teredinibacter turnerae (strain ATCC 39867 / T7901).